Consider the following 165-residue polypeptide: Anterior gradient protein 3 (165 aa).

The N-terminal stretch at 1-20 is a signal peptide; the sequence is MLHSALALCLLLITVSSNLA. The Prevents secretion from ER signature appears at 162–165; the sequence is QSEL.

Belongs to the AGR family. In terms of assembly, interacts with LYPD3 and DAG1 (alphaDAG1). Expressed in the ciliated cells of the airway epithelium. Not detected in the mucous cells.

The protein resides in the endoplasmic reticulum. It localises to the cytoplasm. Its function is as follows. Required for calcium-mediated regulation of ciliary beat frequency and mucociliary clearance in the airway. Might be involved in the regulation of intracellular calcium in tracheal epithelial cells. The sequence is that of Anterior gradient protein 3 from Mus musculus (Mouse).